The sequence spans 113 residues: Urease subunit beta (113 aa).

It belongs to the urease beta subunit family. Heterotrimer of UreA (gamma), UreB (beta) and UreC (alpha) subunits. Three heterotrimers associate to form the active enzyme.

Its subcellular location is the cytoplasm. It catalyses the reaction urea + 2 H2O + H(+) = hydrogencarbonate + 2 NH4(+). It participates in nitrogen metabolism; urea degradation; CO(2) and NH(3) from urea (urease route): step 1/1. This chain is Urease subunit beta, found in Cyanothece sp. (strain PCC 7425 / ATCC 29141).